A 374-amino-acid chain; its full sequence is tRNA (guanine(26)-N(2))-dimethyltransferase (374 aa).

Residues 4-368 enclose the Trm1 methyltransferase domain; that stretch reads IEATEGTTTF…APLPVLYDAI (365 aa). Residues Arg41, Arg66, Asp82, Asp108, and Ala109 each coordinate S-adenosyl-L-methionine. Zn(2+) is bound by residues Cys237, Cys240, Cys256, and Cys259.

This sequence belongs to the class I-like SAM-binding methyltransferase superfamily. Trm1 family.

It carries out the reaction guanosine(26) in tRNA + 2 S-adenosyl-L-methionine = N(2)-dimethylguanosine(26) in tRNA + 2 S-adenosyl-L-homocysteine + 2 H(+). In terms of biological role, dimethylates a single guanine residue at position 26 of a number of tRNAs using S-adenosyl-L-methionine as donor of the methyl groups. This chain is tRNA (guanine(26)-N(2))-dimethyltransferase, found in Methanoregula boonei (strain DSM 21154 / JCM 14090 / 6A8).